The primary structure comprises 150 residues: Arginine repressor (150 aa).

It belongs to the ArgR family.

The protein resides in the cytoplasm. It functions in the pathway amino-acid biosynthesis; L-arginine biosynthesis [regulation]. Regulates arginine biosynthesis genes. The polypeptide is Arginine repressor (Clostridium botulinum (strain Eklund 17B / Type B)).